The sequence spans 469 residues: Siroheme synthase (469 aa).

A precorrin-2 dehydrogenase /sirohydrochlorin ferrochelatase region spans residues M1–L211. Residues E29–Q30 and D50–P51 contribute to the NAD(+) site. S136 carries the phosphoserine modification. The segment at G227–D469 is uroporphyrinogen-III C-methyltransferase. P236 lines the S-adenosyl-L-methionine pocket. D259 serves as the catalytic Proton acceptor. K281 serves as the catalytic Proton donor. Residues G312–D314, I317, T342–A343, M394, and G423 contribute to the S-adenosyl-L-methionine site.

It in the N-terminal section; belongs to the precorrin-2 dehydrogenase / sirohydrochlorin ferrochelatase family. The protein in the C-terminal section; belongs to the precorrin methyltransferase family.

The catalysed reaction is uroporphyrinogen III + 2 S-adenosyl-L-methionine = precorrin-2 + 2 S-adenosyl-L-homocysteine + H(+). The enzyme catalyses precorrin-2 + NAD(+) = sirohydrochlorin + NADH + 2 H(+). It catalyses the reaction siroheme + 2 H(+) = sirohydrochlorin + Fe(2+). It functions in the pathway cofactor biosynthesis; adenosylcobalamin biosynthesis; precorrin-2 from uroporphyrinogen III: step 1/1. Its pathway is cofactor biosynthesis; adenosylcobalamin biosynthesis; sirohydrochlorin from precorrin-2: step 1/1. It participates in porphyrin-containing compound metabolism; siroheme biosynthesis; precorrin-2 from uroporphyrinogen III: step 1/1. The protein operates within porphyrin-containing compound metabolism; siroheme biosynthesis; siroheme from sirohydrochlorin: step 1/1. It functions in the pathway porphyrin-containing compound metabolism; siroheme biosynthesis; sirohydrochlorin from precorrin-2: step 1/1. Functionally, multifunctional enzyme that catalyzes the SAM-dependent methylations of uroporphyrinogen III at position C-2 and C-7 to form precorrin-2 via precorrin-1. Then it catalyzes the NAD-dependent ring dehydrogenation of precorrin-2 to yield sirohydrochlorin. Finally, it catalyzes the ferrochelation of sirohydrochlorin to yield siroheme. The polypeptide is Siroheme synthase (Hahella chejuensis (strain KCTC 2396)).